Consider the following 216-residue polypeptide: MSLGLVGRKVGMTRIFTDDGDSIPVTVVEVGDNRVTQIKTDETDGYTAVQVTFGARRASRVTKPLAGHLAKAGVEAGEIIREFRIDAAKAAELQTGGSLSVDLFEVGQKIDVQGVTIGKGYAGTIKRYHFASGRATHGNSRSHNVPGSIGMAQDPGRVFPGKRMTGHLGDVTRTVQNLEIAKIDAERKLLLVKGAIPGSKNGKVIVTPAVKAKAKA.

Positions 134–153 are disordered; that stretch reads RATHGNSRSHNVPGSIGMAQ. Gln-153 carries the N5-methylglutamine modification.

The protein belongs to the universal ribosomal protein uL3 family. In terms of assembly, part of the 50S ribosomal subunit. Forms a cluster with proteins L14 and L19. Methylated by PrmB.

In terms of biological role, one of the primary rRNA binding proteins, it binds directly near the 3'-end of the 23S rRNA, where it nucleates assembly of the 50S subunit. In Cupriavidus pinatubonensis (strain JMP 134 / LMG 1197) (Cupriavidus necator (strain JMP 134)), this protein is Large ribosomal subunit protein uL3.